The sequence spans 191 residues: Ribosome maturation factor RimM (191 aa).

A PRC barrel domain is found at 107 to 184 (EDDEWHQDDL…LVLVSPPPGL (78 aa)).

The protein belongs to the RimM family. As to quaternary structure, binds ribosomal protein uS19.

It localises to the cytoplasm. An accessory protein needed during the final step in the assembly of 30S ribosomal subunit, possibly for assembly of the head region. Essential for efficient processing of 16S rRNA. May be needed both before and after RbfA during the maturation of 16S rRNA. It has affinity for free ribosomal 30S subunits but not for 70S ribosomes. The sequence is that of Ribosome maturation factor RimM from Kocuria rhizophila (strain ATCC 9341 / DSM 348 / NBRC 103217 / DC2201).